The chain runs to 456 residues: Probable glycine dehydrogenase (decarboxylating) subunit 1 (456 aa).

This sequence belongs to the GcvP family. N-terminal subunit subfamily. The glycine cleavage system is composed of four proteins: P, T, L and H. In this organism, the P 'protein' is a heterodimer of two subunits.

The catalysed reaction is N(6)-[(R)-lipoyl]-L-lysyl-[glycine-cleavage complex H protein] + glycine + H(+) = N(6)-[(R)-S(8)-aminomethyldihydrolipoyl]-L-lysyl-[glycine-cleavage complex H protein] + CO2. The glycine cleavage system catalyzes the degradation of glycine. The P protein binds the alpha-amino group of glycine through its pyridoxal phosphate cofactor; CO(2) is released and the remaining methylamine moiety is then transferred to the lipoamide cofactor of the H protein. This chain is Probable glycine dehydrogenase (decarboxylating) subunit 1, found in Legionella pneumophila (strain Lens).